A 161-amino-acid polypeptide reads, in one-letter code: Nucleotide-binding protein Daci_4781 (161 aa).

It belongs to the YajQ family.

In terms of biological role, nucleotide-binding protein. The polypeptide is Nucleotide-binding protein Daci_4781 (Delftia acidovorans (strain DSM 14801 / SPH-1)).